The sequence spans 140 residues: uncharacterized protein (140 aa).

The next 2 membrane-spanning stretches (helical) occupy residues 4–21 (ILKF…YLFG) and 26–48 (LVKV…SGYL).

It belongs to the bacteriophage holin family. Cp-1 holin subfamily.

It localises to the cell membrane. This is an uncharacterized protein from Listeria monocytogenes serovar 1/2a (strain ATCC BAA-679 / EGD-e).